A 178-amino-acid polypeptide reads, in one-letter code: Nucleolar protein 16 (178 aa).

The disordered stretch occupies residues 1-31; that stretch reads MPKAKGKTRRQKFGYSVNRKRLNRNARRKAA. At Thr8 the chain carries Phosphothreonine. Ser16 bears the Phosphoserine mark. Lys74 participates in a covalent cross-link: Glycyl lysine isopeptide (Lys-Gly) (interchain with G-Cter in SUMO2). Lys90 bears the N6-acetyllysine mark. Thr144 carries the phosphothreonine modification. Glycyl lysine isopeptide (Lys-Gly) (interchain with G-Cter in SUMO2) cross-links involve residues Phe166, Leu167, Lys172, and Arg173.

Belongs to the NOP16 family.

Its subcellular location is the nucleus. The protein resides in the nucleolus. This is Nucleolar protein 16 (NOP16) from Homo sapiens (Human).